The chain runs to 111 residues: MYDSIMSVSARNALSRLSETVAEKGVGSASAPQAVPAAPGASFGEVLSQMTGSVSQKLQAAEATSIQGIKGDAPVRDVVSSVMEAEQSLQTAIAIRDKIVQAYLEISRMPI.

It belongs to the FliE family.

The protein localises to the bacterial flagellum basal body. This chain is Flagellar hook-basal body complex protein FliE, found in Brucella abortus (strain S19).